Reading from the N-terminus, the 341-residue chain is Putative ubiquitin-like-specific protease 1B (341 aa).

Catalysis depends on residues histidine 231, aspartate 248, and cysteine 300.

The protein belongs to the peptidase C48 family.

Protease that catalyzes two essential functions in the SUMO pathway: processing of full-length SUMOs to their mature forms and deconjugation of SUMO from targeted proteins. In Arabidopsis thaliana (Mouse-ear cress), this protein is Putative ubiquitin-like-specific protease 1B (ULP1B).